The primary structure comprises 100 residues: Small ribosomal subunit protein bS6 (100 aa).

The protein belongs to the bacterial ribosomal protein bS6 family.

Binds together with bS18 to 16S ribosomal RNA. The sequence is that of Small ribosomal subunit protein bS6 from Tropheryma whipplei (strain Twist) (Whipple's bacillus).